The following is a 406-amino-acid chain: UPF0754 membrane protein CYA_0973 (406 aa).

2 helical membrane-spanning segments follow: residues 1 to 21 (MALWIYVVPPLAGLVIGYFTN) and 385 to 405 (IVNLGGLLGFLVGCVQVLFLL).

It belongs to the UPF0754 family.

The protein resides in the cell inner membrane. This Synechococcus sp. (strain JA-3-3Ab) (Cyanobacteria bacterium Yellowstone A-Prime) protein is UPF0754 membrane protein CYA_0973.